A 54-amino-acid polypeptide reads, in one-letter code: U7-ctenitoxin-Pk1a (54 aa).

5 disulfides stabilise this stretch: C3-C17, C10-C23, C14-C52, C16-C37, and C25-C35.

As to expression, expressed by the venom gland.

Its subcellular location is the secreted. In terms of biological role, blocks voltage-gated sodium channels (Nav). Causes immediate spastic paralysis and death in mice within 1 minute of injection at dose levels of 1.5 ug per mouse. The chain is U7-ctenitoxin-Pk1a from Phoneutria keyserlingi (Brazilian wandering spider).